The primary structure comprises 788 residues: Response regulator SSK1 (788 aa).

The 158-residue stretch at 534-691 folds into the Response regulatory domain; the sequence is NVLIVEDNII…WLERKVKEWG (158 aa). At D583 the chain carries 4-aspartylphosphate.

The protein belongs to the SSK1 family.

It localises to the cytoplasm. In terms of biological role, two-domain response regulator protein in the two-component signal transduction system of the HOG1 pathway. Controls high-osmolarity adaptation and fungicide sensitivity via its regulation of the phosphorylation of HOG1. The protein is Response regulator SSK1 of Cochliobolus heterostrophus (strain C5 / ATCC 48332 / race O) (Southern corn leaf blight fungus).